The primary structure comprises 102 residues: Monothiol glutaredoxin-S10 (102 aa).

Residues 1 to 101 (MDVVARLASQ…ILLKEAGALW (101 aa)) form the Glutaredoxin domain. [2Fe-2S] cluster is bound at residue cysteine 21. The Responsive for interaction with TGA factors motif lies at 99–102 (ALWL).

It belongs to the glutaredoxin family. CC-type subfamily.

Its subcellular location is the cytoplasm. It localises to the nucleus. In terms of biological role, may only reduce GSH-thiol disulfides, but not protein disulfides. The polypeptide is Monothiol glutaredoxin-S10 (GRXS10) (Arabidopsis thaliana (Mouse-ear cress)).